Here is a 396-residue protein sequence, read N- to C-terminus: NADH-quinone oxidoreductase subunit D (396 aa).

It belongs to the complex I 49 kDa subunit family. As to quaternary structure, NDH-1 is composed of 14 different subunits. Subunits NuoB, C, D, E, F, and G constitute the peripheral sector of the complex.

The protein resides in the cell inner membrane. It catalyses the reaction a quinone + NADH + 5 H(+)(in) = a quinol + NAD(+) + 4 H(+)(out). NDH-1 shuttles electrons from NADH, via FMN and iron-sulfur (Fe-S) centers, to quinones in the respiratory chain. The immediate electron acceptor for the enzyme in this species is believed to be ubiquinone. Couples the redox reaction to proton translocation (for every two electrons transferred, four hydrogen ions are translocated across the cytoplasmic membrane), and thus conserves the redox energy in a proton gradient. The sequence is that of NADH-quinone oxidoreductase subunit D from Agrobacterium fabrum (strain C58 / ATCC 33970) (Agrobacterium tumefaciens (strain C58)).